The primary structure comprises 471 residues: Desmin (471 aa).

A head region spans residues 2 to 109 (SQAYSSSQRV…QEFLTTRTNE (108 aa)). Residue S7 is modified to Phosphoserine; by CDK1. S12 carries the phosphoserine; by AURKB modification. At R16 the chain carries Omega-N-methylarginine. T17 carries the post-translational modification Phosphothreonine; by AURKB and ROCK1. S28 carries the phosphoserine; by CDK1 modification. At S31 the chain carries Phosphoserine. A Phosphoserine; by CDK1 modification is found at S32. The residue at position 37 (R37) is an Asymmetric dimethylarginine; alternate. R37 is modified (omega-N-methylarginine; alternate). Residue S45 is modified to Phosphoserine. R58 is subject to ADP-ribosylarginine. S60 carries the post-translational modification Phosphoserine; by AURKB. R70 carries the post-translational modification Omega-N-methylarginine. The residue at position 77 (T77) is a Phosphothreonine; by ROCK1. Phosphoserine is present on S81. In terms of domain architecture, IF rod spans 109–417 (EKVELQELND…KLLEGEESRI (309 aa)). The interval 110 to 142 (KVELQELNDRFANYIEKVRFLEQQNAALAAEVN) is coil 1A. The tract at residues 143-152 (RLKGREPTRV) is linker 1. The coil 1B stretch occupies residues 153 to 253 (AEIYEEELRE…HEEEIRELQA (101 aa)). The linker 12 stretch occupies residues 254-269 (QLQEQQVQVEMDMSKP). Residues 269-416 (PDLTAALRDI…RKLLEGEESR (148 aa)) form an interaction with NEB region. The segment at 270–288 (DLTAALRDIRAQYETIAAK) is coil 2A. Positions 289 to 296 (NISEAEEW) are linker 2. A phosphoserine mark is found at S291, S359, S362, and S425. Residues 297–413 (YKSKVSDLTQ…ATYRKLLEGE (117 aa)) form a coil 2B region. A tail region spans residues 414-471 (ESRINLPIQTFSALNFRETSPEQRGSEVHTKKTVMIKTIETRDGEVVSEATQQQHEVL). The interval 439 to 454 (SEVHTKKTVMIKTIET) is interaction with CRYAB.

This sequence belongs to the intermediate filament family. Homomer. Interacts with DST. Interacts with MTM1. Interacts with EPPK1; interaction is dependent of higher-order structure of intermediate filament. Interacts with CRYAB. Interacts with NEB (via nebulin repeats 160-164). Interacts (via rod region) with NEBL (via nebulin repeats 1-5). Interacts with ASB2; the interaction targets DES for proteasomal degradation. Interacts with PKP1. Interacts with FLII. ADP-ribosylation prevents ability to form intermediate filaments. Post-translationally, phosphorylation at Ser-7, Ser-28 and Ser-32 by CDK1 and phosphorylation at Ser-60 by AURKB contribute to efficient separation of desmin intermediate filaments during mitosis. In terms of processing, ubiquitination by a SCF-like complex containing ASB2 leads to proteasomal degradation.

The protein resides in the cytoplasm. The protein localises to the myofibril. It is found in the sarcomere. Its subcellular location is the z line. It localises to the cell membrane. The protein resides in the sarcolemma. The protein localises to the nucleus. It is found in the cell tip. Its subcellular location is the nucleus envelope. Functionally, muscle-specific type III intermediate filament essential for proper muscular structure and function. Plays a crucial role in maintaining the structure of sarcomeres, inter-connecting the Z-disks and forming the myofibrils, linking them not only to the sarcolemmal cytoskeleton, but also to the nucleus and mitochondria, thus providing strength for the muscle fiber during activity. In adult striated muscle they form a fibrous network connecting myofibrils to each other and to the plasma membrane from the periphery of the Z-line structures. May act as a sarcomeric microtubule-anchoring protein: specifically associates with detyrosinated tubulin-alpha chains, leading to buckled microtubules and mechanical resistance to contraction. Required for nuclear membrane integrity, via anchoring at the cell tip and nuclear envelope, resulting in maintenance of microtubule-derived intracellular mechanical forces. Contributes to the transcriptional regulation of the NKX2-5 gene in cardiac progenitor cells during a short period of cardiomyogenesis and in cardiac side population stem cells in the adult. Plays a role in maintaining an optimal conformation of nebulette (NEB) on heart muscle sarcomeres to bind and recruit cardiac alpha-actin. This chain is Desmin (DES), found in Sus scrofa (Pig).